The chain runs to 207 residues: Small ribosomal subunit protein uS4 (207 aa).

Residues 31-53 form a disordered region; sequence KAKFDSKPGQHGRTSGTRTSDFG. The span at 42–52 shows a compositional bias: polar residues; the sequence is GRTSGTRTSDF. The S4 RNA-binding domain occupies 97–158; it reads SRLDNVVYRM…KSKKQTRVTE (62 aa).

This sequence belongs to the universal ribosomal protein uS4 family. In terms of assembly, part of the 30S ribosomal subunit. Contacts protein S5. The interaction surface between S4 and S5 is involved in control of translational fidelity.

One of the primary rRNA binding proteins, it binds directly to 16S rRNA where it nucleates assembly of the body of the 30S subunit. In terms of biological role, with S5 and S12 plays an important role in translational accuracy. The protein is Small ribosomal subunit protein uS4 of Polaromonas sp. (strain JS666 / ATCC BAA-500).